We begin with the raw amino-acid sequence, 245 residues long: Peroxisome biogenesis protein 19-2 (245 aa).

The segment at 17-106 (ALDDFKDLNL…LSSKQQPTGS (90 aa)) is disordered. 2 stretches are compositionally biased toward basic and acidic residues: residues 33 to 44 (VKKEEGDKKETE) and 71 to 92 (AKED…ETVK). Positions 96-105 (SLSSKQQPTG) are enriched in polar residues. Cys-242 carries the cysteine methyl ester modification. Cys-242 carries S-farnesyl cysteine lipidation. The propeptide at 243 to 245 (CVM) is removed in mature form.

Belongs to the peroxin-19 family. As to quaternary structure, dimer. Interacts with PEX10 (via C-terminus). May be farnesylated. Expressed in roots, leaves, flowers, siliques and stems. Highest expression in roots and leaves.

It localises to the cytoplasm. Its subcellular location is the peroxisome membrane. Functionally, contributes to morphology determination of peroxisomes, but not to import of peroxisomal matrix proteins. Required for proper post-translational import and stabilization of peroxisomal membrane proteins (PMPs). Acts as a cytosolic import receptor for PMPs and delivers them to the docking factor PEX3 at the peroxisomal membrane for subsequent insertion into the membrane. Acts as a chaperone in stabilizing or maintaining PMPs in the lipid bilayer. The sequence is that of Peroxisome biogenesis protein 19-2 (PEX19-2) from Arabidopsis thaliana (Mouse-ear cress).